A 125-amino-acid polypeptide reads, in one-letter code: Multifunctional methyltransferase subunit TRM112-like protein (125 aa).

The TRM112 domain occupies 2 to 119 (RLLTHNLLSS…SRGIPNMLLS (118 aa)). Phosphoserine is present on serine 119.

Belongs to the TRM112 family. Part of the heterodimeric BUD23-TRM112 methyltransferase complex; this heterodimerization is necessary for the metabolic stability and activity of the catalytic subunit BUD23. Part of the heterodimeric N6AMT1-TRM112 methyltransferase complex; this heterodimerization is necessary for S-adenosyl-L-methionine-binding to N6AMT1/HEMK2. Part of the heterodimeric ALKBH8-TRM112 methyltransferase complex. Part of the heterodimeric METTL5-TRM112 methyltransferase complex; this heterodimerization is necessary for the stability of the catalytic subunit METTL5. Part of the heterodimeric THUMPD3-TRM112 methyltransferase complex; this complex forms an active tRNA methyltransferase, where TRMT112 acts as an activator of the catalytic subunit THUMPD3. Part of the heterodimeric THUMPD2-TRM112 methyltransferase complex; this complex forms an active tRNA methyltransferase, where TRMT112 acts as an activator of the catalytic subunit THUMPD2. Part of the heterodimeric TRMT11-TRM112 methyltransferase complex; this complex forms an active tRNA methyltransferase, where TRMT112 acts as an activator of the catalytic subunit TRMT11.

It localises to the nucleus. Its subcellular location is the nucleoplasm. It is found in the cytoplasm. The protein resides in the perinuclear region. In terms of biological role, acts as an activator of both rRNA/tRNA and protein methyltransferases. Together with methyltransferase BUD23, methylates the N(7) position of a guanine in 18S rRNA. The heterodimer with HEMK2/N6AMT1 catalyzes N5-methylation of ETF1 on 'Gln-185', using S-adenosyl L-methionine as methyl donor. The heterodimer with ALKBH8 catalyzes the methylation of 5-carboxymethyl uridine to 5-methylcarboxymethyl uridine at the wobble position of the anticodon loop in target tRNA species. Together with methyltransferase THUMPD3, catalyzes the formation of N(2)-methylguanosine at position 6 in a broad range of tRNA substrates and at position 7 of tRNA(Trp). Involved in the pre-rRNA processing steps leading to small-subunit rRNA production. Together with methyltransferase METTL5, specifically methylates the 6th position of adenine in position 1832 of 18S rRNA. The polypeptide is Multifunctional methyltransferase subunit TRM112-like protein (TRMT112) (Bos taurus (Bovine)).